The following is a 240-amino-acid chain: Probable alpha-aspartyl dipeptidase (240 aa).

Active-site charge relay system residues include Ser-125, Asp-140, and His-162.

Belongs to the peptidase S51 family.

The protein resides in the cytoplasm. It carries out the reaction Dipeptidase E catalyzes the hydrolysis of dipeptides Asp-|-Xaa. It does not act on peptides with N-terminal Glu, Asn or Gln, nor does it cleave isoaspartyl peptides.. Its function is as follows. Hydrolyzes dipeptides containing N-terminal aspartate residues. This is Probable alpha-aspartyl dipeptidase from Drosophila melanogaster (Fruit fly).